The primary structure comprises 124 residues: Large ribosomal subunit protein uL18 (124 aa).

Belongs to the universal ribosomal protein uL18 family. In terms of assembly, part of the 50S ribosomal subunit; part of the 5S rRNA/L5/L18/L25 subcomplex. Contacts the 5S and 23S rRNAs.

Its function is as follows. This is one of the proteins that bind and probably mediate the attachment of the 5S RNA into the large ribosomal subunit, where it forms part of the central protuberance. In Frankia casuarinae (strain DSM 45818 / CECT 9043 / HFP020203 / CcI3), this protein is Large ribosomal subunit protein uL18.